The sequence spans 303 residues: N-acetyl-D-glucosamine kinase (303 aa).

Residues 4-11 and 133-140 contribute to the ATP site; these read GFDIGGTK and GVGGGLIF. Residues His157, Cys177, Cys179, and Cys184 each coordinate Zn(2+).

This sequence belongs to the ROK (NagC/XylR) family. NagK subfamily.

It catalyses the reaction N-acetyl-D-glucosamine + ATP = N-acetyl-D-glucosamine 6-phosphate + ADP + H(+). The protein operates within cell wall biogenesis; peptidoglycan recycling. Functionally, catalyzes the phosphorylation of N-acetyl-D-glucosamine (GlcNAc) derived from cell-wall degradation, yielding GlcNAc-6-P. The polypeptide is N-acetyl-D-glucosamine kinase (Escherichia coli O81 (strain ED1a)).